A 207-amino-acid polypeptide reads, in one-letter code: Ribosome maturation factor RimP (207 aa).

Belongs to the RimP family.

The protein localises to the cytoplasm. Its function is as follows. Required for maturation of 30S ribosomal subunits. The protein is Ribosome maturation factor RimP of Parvibaculum lavamentivorans (strain DS-1 / DSM 13023 / NCIMB 13966).